We begin with the raw amino-acid sequence, 351 residues long: Ferredoxin--NADP reductase (351 aa).

Residues Thr14, Asp33, Gln41, Tyr46, Ala86, Phe121, Asp287, and Thr328 each contribute to the FAD site.

This sequence belongs to the ferredoxin--NADP reductase type 2 family. As to quaternary structure, homodimer. The cofactor is FAD.

It catalyses the reaction 2 reduced [2Fe-2S]-[ferredoxin] + NADP(+) + H(+) = 2 oxidized [2Fe-2S]-[ferredoxin] + NADPH. The chain is Ferredoxin--NADP reductase from Flavobacterium psychrophilum (strain ATCC 49511 / DSM 21280 / CIP 103535 / JIP02/86).